The primary structure comprises 187 residues: Large ribosomal subunit protein uL13 (187 aa).

Belongs to the universal ribosomal protein uL13 family. Part of the 50S ribosomal subunit.

Functionally, this protein is one of the early assembly proteins of the 50S ribosomal subunit, although it is not seen to bind rRNA by itself. It is important during the early stages of 50S assembly. This chain is Large ribosomal subunit protein uL13, found in Pyrobaculum aerophilum (strain ATCC 51768 / DSM 7523 / JCM 9630 / CIP 104966 / NBRC 100827 / IM2).